The chain runs to 325 residues: LIM and senescent cell antigen-like-containing domain protein 1 (325 aa).

Alanine 2 is subject to N-acetylalanine. LIM zinc-binding domains are found at residues 10 to 62 (CERC…CEHD), 71 to 121 (CHQC…CRPC), 135 to 184 (CQKC…CLPC), 193 to 243 (CGAC…CETH), and 252 to 303 (CFHC…CKKC).

In terms of assembly, component of the heterotrimeric IPP (ILK-PINCH-PARVIN) complex composed of ILK, LIMS1/PINCH and PARVA; the complex binds to F-actin via the C-terminal tail of LIMS1 and the N-terminal region of PARVA, promoting F-actin filament bundling. Formation of the IPP complex is dependent on protein kinase C and precedes integrin-mediated cell adhesion and spreading. Competes with LIMS2 for interaction with ILK. Interacts with SH3/SH2 adapter NCK2, thereby linking the complex to cell surface receptors. Interacts (via LIM zinc-binding 5) with TGFB1I1.

It is found in the cell junction. Its subcellular location is the focal adhesion. The protein resides in the cell membrane. Functionally, within the IPP (ILK-PINCH-PARVIN) complex, binds to F-actin, promoting F-actin bundling, a process required to generate force for actin cytoskeleton reorganization and subsequent dynamic cell adhesion events such as cell spreading and migration. This Mus musculus (Mouse) protein is LIM and senescent cell antigen-like-containing domain protein 1 (Lims1).